We begin with the raw amino-acid sequence, 534 residues long: O-phosphoserine--tRNA(Cys) ligase (534 aa).

Residues 186 to 188 (HMT), 231 to 233 (SAS), 273 to 274 (YY), and asparagine 325 contribute to the substrate site.

Belongs to the class-II aminoacyl-tRNA synthetase family. O-phosphoseryl-tRNA(Cys) synthetase subfamily. Homotetramer. Interacts with SepCysS.

The enzyme catalyses tRNA(Cys) + O-phospho-L-serine + ATP = O-phospho-L-seryl-tRNA(Cys) + AMP + diphosphate. Its function is as follows. Catalyzes the attachment of O-phosphoserine (Sep) to tRNA(Cys). The chain is O-phosphoserine--tRNA(Cys) ligase (sepS) from Archaeoglobus fulgidus (strain ATCC 49558 / DSM 4304 / JCM 9628 / NBRC 100126 / VC-16).